The following is a 200-amino-acid chain: Lipid A acyltransferase PagP (200 aa).

The first 24 residues, methionine 1–alanine 24, serve as a signal peptide directing secretion. Residues histidine 72, aspartate 115, and serine 116 contribute to the active site.

This sequence belongs to the lipid A palmitoyltransferase family. Homodimer.

The protein localises to the cell outer membrane. The catalysed reaction is a lipid A + a 1,2-diacyl-sn-glycero-3-phosphocholine = a hepta-acyl lipid A + a 2-acyl-sn-glycero-3-phosphocholine. It catalyses the reaction a lipid IVA + a 1,2-diacyl-sn-glycero-3-phosphocholine = a lipid IVB + a 2-acyl-sn-glycero-3-phosphocholine. The enzyme catalyses a lipid IIA + a 1,2-diacyl-sn-glycero-3-phosphocholine = a lipid IIB + a 2-acyl-sn-glycero-3-phosphocholine. Functionally, transfers a fatty acid residue from the sn-1 position of a phospholipid to the N-linked hydroxyfatty acid chain on the proximal unit of lipid A or its precursors. The chain is Lipid A acyltransferase PagP from Dickeya dadantii (strain 3937) (Erwinia chrysanthemi (strain 3937)).